A 498-amino-acid chain; its full sequence is Putrescine N-hydroxylase (498 aa).

FAD contacts are provided by Phe23, Asp43, Lys45, Trp50, His51, and Gln62. Gln62 and Arg104 together coordinate NADP(+). Val127 serves as a coordination point for FAD. NADP(+)-binding residues include Ser207, Arg231, Tyr275, and Leu309. FAD is bound by residues Asn386, Pro397, and Leu399. A compositionally biased stretch (polar residues) spans 443-474 (LESNTHSAVTPSKTRQGLNPSAKSVQQPSIEP). The interval 443 to 498 (LESNTHSAVTPSKTRQGLNPSAKSVQQPSIEPQTALRIAPTGGNVSALMAPNKEAQ) is disordered.

This sequence belongs to the lysine N(6)-hydroxylase/L-ornithine N(5)-oxygenase family. FAD serves as cofactor.

The catalysed reaction is putrescine + NADPH + O2 = N-hydroxyputrescine + NADP(+) + H2O. It participates in siderophore biosynthesis. N-hydroxylating monooxygenase involved in the biosynthesis of the siderophore putrebactin. Catalyzes the N-hydroxylation of the aliphatic diamine putrescine into N-hydroxyputrescine (NHP). This Shewanella oneidensis (strain ATCC 700550 / JCM 31522 / CIP 106686 / LMG 19005 / NCIMB 14063 / MR-1) protein is Putrescine N-hydroxylase.